The chain runs to 237 residues: Purine nucleoside phosphorylase DeoD-type (237 aa).

Residue His4 participates in a purine D-ribonucleoside binding. Phosphate is bound by residues Gly20, Arg24, Arg43, and 87–90; that span reads RVGT. A purine D-ribonucleoside-binding positions include 179–181 and 203–204; these read EME and SD. The active-site Proton donor is the Asp204.

Belongs to the PNP/UDP phosphorylase family. As to quaternary structure, homohexamer; trimer of homodimers.

It carries out the reaction a purine D-ribonucleoside + phosphate = a purine nucleobase + alpha-D-ribose 1-phosphate. It catalyses the reaction a purine 2'-deoxy-D-ribonucleoside + phosphate = a purine nucleobase + 2-deoxy-alpha-D-ribose 1-phosphate. In terms of biological role, catalyzes the reversible phosphorolytic breakdown of the N-glycosidic bond in the beta-(deoxy)ribonucleoside molecules, with the formation of the corresponding free purine bases and pentose-1-phosphate. This Streptococcus gordonii (strain Challis / ATCC 35105 / BCRC 15272 / CH1 / DL1 / V288) protein is Purine nucleoside phosphorylase DeoD-type.